The following is a 963-amino-acid chain: Respiratory burst oxidase homolog protein A (963 aa).

The segment covering 1-12 (MRGLPGHERRWT) has biased composition (basic and acidic residues). Residues 1–36 (MRGLPGHERRWTSDTVSSGKDLSGESSPGTDSGNIS) are disordered. The Cytoplasmic segment spans residues 1–399 (MRGLPGHERR…VYSLQENWKR (399 aa)). Residues 13-36 (SDTVSSGKDLSGESSPGTDSGNIS) show a composition bias toward polar residues. 2 EF-hand-like regions span residues 219 to 227 (AKDGYLYRS) and 253 to 264 (RRLKVDKISKEE). The 36-residue stretch at 276-311 (SFDSRLQIFFDMVDKNEDGRIGEEEVKEIIMLSASA) folds into the EF-hand domain. Ca(2+) contacts are provided by D289, N291, D293, R295, and E300. A helical membrane pass occupies residues 400 to 420 (IWVLVLWILIMIGLFLWKFYL). Residues 421–435 (YKQKSAFQVMGYCLL) are Extracellular-facing. Residues 436–456 (TAKGAAETLKFNMALILLPVC) form a helical membrane-spanning segment. The Ferric oxidoreductase domain maps to 438-595 (KGAAETLKFN…LLIIVYIVLI (158 aa)). The Cytoplasmic segment spans residues 457–482 (RNTITFLRSTKLSCFVPFDDNINFHK). Residues 483 to 503 (TVAAAIVTGIILHAGNHLVCD) traverse the membrane as a helical segment. Residues 504 to 535 (FPKLIHANNTNYQKYLVNDFGPSQPQYIDLVK) lie on the Extracellular side of the membrane. Residues 536 to 556 (GVEGVTGIIMVILMAIAFTLA) traverse the membrane as a helical segment. The Cytoplasmic portion of the chain corresponds to 557–583 (TRWFRRSLIKFPKPFDRLTGFNAFWYS). The helical transmembrane segment at 584–604 (HHLLIIVYIVLIIHGTFLYLV) threads the bilayer. Over 605–759 (HNWYSKTTWM…APAQDYRKYD (155 aa)) the chain is Extracellular. One can recognise an FAD-binding FR-type domain in the interval 634–754 (SGLYTVRLLK…DGPYGAPAQD (121 aa)). A helical transmembrane segment spans residues 760-780 (VLLLVGLGIGATPFISILKDL). Residues 781–963 (LKNIVTMEEQ…TKFEFHKEHF (183 aa)) lie on the Cytoplasmic side of the membrane.

This sequence belongs to the RBOH (TC 5.B.1.3) family. In terms of assembly, monomer and homodimer. In terms of processing, phosphorylated by CPK.

It localises to the cell membrane. In terms of biological role, calcium-dependent NADPH oxidase that generates superoxide. Involved in the rapid and transient phase I oxidative burst induced by pathogen infection. In Solanum tuberosum (Potato), this protein is Respiratory burst oxidase homolog protein A (RBOHA).